The primary structure comprises 169 residues: 3-hydroxyacyl-[acyl-carrier-protein] dehydratase FabZ (169 aa).

The active site involves histidine 66.

Belongs to the thioester dehydratase family. FabZ subfamily.

The protein localises to the cytoplasm. The enzyme catalyses a (3R)-hydroxyacyl-[ACP] = a (2E)-enoyl-[ACP] + H2O. Functionally, involved in unsaturated fatty acids biosynthesis. Catalyzes the dehydration of short chain beta-hydroxyacyl-ACPs and long chain saturated and unsaturated beta-hydroxyacyl-ACPs. This chain is 3-hydroxyacyl-[acyl-carrier-protein] dehydratase FabZ, found in Helicobacter hepaticus (strain ATCC 51449 / 3B1).